Reading from the N-terminus, the 180-residue chain is MSKKNTDISKFLSYILRHQPEAIGLSLDKEGWVVISDLILCAAEEGYIFDNNLIHSIVNNSDKKRFTISDDGLRIRAAQGHSTQQVDIRYEAKIPPEFLYHGTATRFIISIRVQGLNAKDRQYVHLSADEETAIQVGSRHGKPIVLRIKALTMYEQGFYFYQAANGVWLSNSIPYQFIQE.

It belongs to the KptA/TPT1 family.

Removes the 2'-phosphate from RNA via an intermediate in which the phosphate is ADP-ribosylated by NAD followed by a presumed transesterification to release the RNA and generate ADP-ribose 1''-2''-cyclic phosphate (APPR&gt;P). May function as an ADP-ribosylase. The protein is Probable RNA 2'-phosphotransferase of Pectobacterium atrosepticum (strain SCRI 1043 / ATCC BAA-672) (Erwinia carotovora subsp. atroseptica).